Reading from the N-terminus, the 105-residue chain is MARRLWILSLLAVTLTVALAAPSQKSKRSVTVEQPSTSTNSDGNTTPSKNVTLSQGGSTTDGDEDYSGGDYDVLITDTDGGNHQQPQEKTDEHKGEHTKENEKTQ.

A signal peptide spans 1–20 (MARRLWILSLLAVTLTVALA). The interval 21-105 (APSQKSKRSV…EHTKENEKTQ (85 aa)) is disordered. Positions 29–55 (SVTVEQPSTSTNSDGNTTPSKNVTLSQ) are enriched in polar residues. The N-linked (GlcNAc...) asparagine; by host glycan is linked to asparagine 50. A compositionally biased stretch (basic and acidic residues) spans 86 to 105 (PQEKTDEHKGEHTKENEKTQ).

The protein belongs to the HHV-5 UL22A protein family.

Its subcellular location is the virion. This is Glycoprotein UL22A (UL22A) from Homo sapiens (Human).